Here is a 664-residue protein sequence, read N- to C-terminus: Cyclic nucleotide-gated channel alpha-2 (664 aa).

Over residues 1 to 20 (MTEKSNGVKSSPANNHNNHV) the composition is skewed to polar residues. The segment at 1 to 49 (MTEKSNGVKSSPANNHNNHVPATIKANGKDESRTRSRPQSAADDDTSSE) is disordered. The Cytoplasmic segment spans residues 1-144 (MTEKSNGVKS…PAGDWYYRWL (144 aa)). A helical transmembrane segment spans residues 145-166 (FVIAMPVLYNWCLLVARACFSD). At 167–176 (LQRGYFLVWL) the chain is on the extracellular side. A helical transmembrane segment spans residues 177 to 197 (VLDYFSDVVYIADLFIRLRTG). Residues 198–222 (FLEQGLLVKDPKKLRDNYIHTLQFK) lie on the Cytoplasmic side of the membrane. A helical membrane pass occupies residues 223-241 (LDVASIIPTDLIYFAVGIH). Residues 242–246 (NPELR) are Extracellular-facing. A helical transmembrane segment spans residues 247–265 (FNRLLHFARMFEFFDRTET). The Cytoplasmic segment spans residues 266-272 (RTSYPNI). The tract at residues 270 to 378 (PNIFRISNLV…GNVGSMISNM (109 aa)) is ion conduction pathway. A helical membrane pass occupies residues 273-296 (FRISNLVLYILVIIHWNACIYYAI). The Extracellular portion of the chain corresponds to 297–319 (SKSIGFGVDTWVYPNITDPEYGY). The next 2 helical transmembrane spans lie at 320 to 354 (LAREYIYCLYWSTLTLTTIGETPPPVKDEEYLFVI) and 355 to 379 (FDFLIGVLIFATIVGNVGSMISNMN). A selectivity filter region spans residues 337-340 (TIGE). The tract at residues 380 to 456 (ATRAEFQAKI…STLKKVRIFQ (77 aa)) is C-linker. At 380–664 (ATRAEFQAKI…SPEPAAAEQP (285 aa)) the chain is on the cytoplasmic side. Residues 460-580 (AGLLVELVLK…EERGREILMK (121 aa)) are cyclic nucleotide-binding domain. 3',5'-cyclic GMP-binding residues include G520, S523, R536, and T537. 3',5'-cyclic AMP-binding residues include R536 and T537. A coiled-coil region spans residues 597–651 (VQEKLKQLETNMETLYTRFGRLLAEYTGAQQKLKQRITVLEVKMKQNTEDDYLSD). The segment at 644–664 (TEDDYLSDGMNSPEPAAAEQP) is disordered.

Belongs to the cyclic nucleotide-gated cation channel (TC 1.A.1.5) family. CNGA2 subfamily. As to quaternary structure, the olfactory cyclic nucleotide-gated channel is an heterotetramer composed of CNGA2, CNGA4 and CNGB1b subunits with 2:1:1 stoichiometry.

It localises to the cell projection. The protein resides in the cilium membrane. The enzyme catalyses Ca(2+)(in) = Ca(2+)(out). The catalysed reaction is Na(+)(in) = Na(+)(out). It catalyses the reaction K(+)(in) = K(+)(out). It carries out the reaction NH4(+)(in) = NH4(+)(out). The enzyme catalyses Rb(+)(in) = Rb(+)(out). The catalysed reaction is Li(+)(in) = Li(+)(out). It catalyses the reaction Cs(+)(in) = Cs(+)(out). Its function is as follows. Pore-forming subunit of the olfactory cyclic nucleotide-gated channel. Operates in the cilia of olfactory sensory neurons where chemical stimulation of the odorant is converted to an electrical signal. Mediates odorant-induced cAMP-dependent Ca(2+) influx triggering neuron depolarization. The rise of intracellular Ca(2+) levels potentiates the olfactory response by activating Ca(2+)-dependent Cl(-) channels, but it also serves as a negative feedback signal to desensitize the channel for rapid adaptation to odorants. Conducts cAMP- and cGMP-gated ion currents, with permeability for monovalent and divalent cations. This Oryctolagus cuniculus (Rabbit) protein is Cyclic nucleotide-gated channel alpha-2.